A 127-amino-acid chain; its full sequence is uncharacterized protein (127 aa).

A coiled-coil region spans residues 71-126 (FYLREYRRIRRRIKELKNRAKYISKGEIAYNPKIMKEVEALKEKLSEIEKKIEELK).

This is an uncharacterized protein from Aquifex aeolicus (strain VF5).